An 89-amino-acid chain; its full sequence is Small ribosomal subunit protein uS15 (89 aa).

Belongs to the universal ribosomal protein uS15 family. Part of the 30S ribosomal subunit. Forms a bridge to the 50S subunit in the 70S ribosome, contacting the 23S rRNA.

Its function is as follows. One of the primary rRNA binding proteins, it binds directly to 16S rRNA where it helps nucleate assembly of the platform of the 30S subunit by binding and bridging several RNA helices of the 16S rRNA. Functionally, forms an intersubunit bridge (bridge B4) with the 23S rRNA of the 50S subunit in the ribosome. This Sodalis glossinidius (strain morsitans) protein is Small ribosomal subunit protein uS15.